Here is a 206-residue protein sequence, read N- to C-terminus: MNHKTGAILVLSGPSGAGKSSLIKEVIDDIGECYFSISTTTRPIREGEVDGVHYHFVSESEFKKDIEDEFFLEYAVVHSNYYGTSIKPVKKALKSGKLVIFDIDVQGNATIINRLGDITTSVFISPPTLSELKKRLEARSTDTKDVIERRIEMAKREMQRVSEYDFLIVNDNLQEAAKTLRIIADAARVKIPSNEINDFVRSWEDI.

Residues 6-185 (GAILVLSGPS…AAKTLRIIAD (180 aa)) form the Guanylate kinase-like domain. Position 13–20 (13–20 (GPSGAGKS)) interacts with ATP.

Belongs to the guanylate kinase family.

It localises to the cytoplasm. The catalysed reaction is GMP + ATP = GDP + ADP. Its function is as follows. Essential for recycling GMP and indirectly, cGMP. This is Guanylate kinase from Sulfurimonas denitrificans (strain ATCC 33889 / DSM 1251) (Thiomicrospira denitrificans (strain ATCC 33889 / DSM 1251)).